A 573-amino-acid polypeptide reads, in one-letter code: Proline--tRNA ligase (573 aa).

It belongs to the class-II aminoacyl-tRNA synthetase family. ProS type 1 subfamily. In terms of assembly, homodimer.

The protein resides in the cytoplasm. The enzyme catalyses tRNA(Pro) + L-proline + ATP = L-prolyl-tRNA(Pro) + AMP + diphosphate. Functionally, catalyzes the attachment of proline to tRNA(Pro) in a two-step reaction: proline is first activated by ATP to form Pro-AMP and then transferred to the acceptor end of tRNA(Pro). As ProRS can inadvertently accommodate and process non-cognate amino acids such as alanine and cysteine, to avoid such errors it has two additional distinct editing activities against alanine. One activity is designated as 'pretransfer' editing and involves the tRNA(Pro)-independent hydrolysis of activated Ala-AMP. The other activity is designated 'posttransfer' editing and involves deacylation of mischarged Ala-tRNA(Pro). The misacylated Cys-tRNA(Pro) is not edited by ProRS. The polypeptide is Proline--tRNA ligase (Cupriavidus taiwanensis (strain DSM 17343 / BCRC 17206 / CCUG 44338 / CIP 107171 / LMG 19424 / R1) (Ralstonia taiwanensis (strain LMG 19424))).